Here is a 308-residue protein sequence, read N- to C-terminus: Cytochrome b (308 aa).

4 consecutive transmembrane segments (helical) span residues 1 to 21 (FGSL…LLAM), 45 to 66 (WLIR…YLHI), 81 to 101 (WNIG…GYVL), and 146 to 166 (FFAL…IHLT). Heme b-binding residues include His-51 and His-65. His-150 and His-164 together coordinate heme b. Residue His-169 participates in a ubiquinone binding. 3 consecutive transmembrane segments (helical) span residues 194-214 (TKDA…AMFS), 256-276 (LGGV…PLLH), and 288-308 (LSQF…WIGS).

It belongs to the cytochrome b family. As to quaternary structure, the cytochrome bc1 complex contains 11 subunits: 3 respiratory subunits (MT-CYB, CYC1 and UQCRFS1), 2 core proteins (UQCRC1 and UQCRC2) and 6 low-molecular weight proteins (UQCRH/QCR6, UQCRB/QCR7, UQCRQ/QCR8, UQCR10/QCR9, UQCR11/QCR10 and a cleavage product of UQCRFS1). This cytochrome bc1 complex then forms a dimer. The cofactor is heme b.

The protein resides in the mitochondrion inner membrane. Functionally, component of the ubiquinol-cytochrome c reductase complex (complex III or cytochrome b-c1 complex) that is part of the mitochondrial respiratory chain. The b-c1 complex mediates electron transfer from ubiquinol to cytochrome c. Contributes to the generation of a proton gradient across the mitochondrial membrane that is then used for ATP synthesis. This Zaratornis stresemanni (White-cheeked cotinga) protein is Cytochrome b (MT-CYB).